Reading from the N-terminus, the 940-residue chain is Translation initiation factor IF-2 (940 aa).

Disordered regions lie at residues 116–137, 151–196, 210–294, and 318–346; these read PEQE…SSDT, EVEA…EQRS, AVRK…VKKV, and HSAP…VANR. Over residues 121–137 the composition is skewed to polar residues; sequence LESTSVAEIPESVSSDT. Positions 159-180 are enriched in acidic residues; the sequence is PEPEVEATPEPEVEDVVAEEAE. The segment covering 181 to 193 has biased composition (low complexity); the sequence is PAAAEPAPAPVVE. Basic and acidic residues predominate over residues 213 to 239; sequence KKAEEEAEVARRKADAEKAEAAAKQKA. Residues 282–294 are compositionally biased toward basic residues; sequence KHNKKAGKAVKKV. Low complexity predominate over residues 326 to 337; sequence GGQNNNSSNSGS. The region spanning 441-610 is the tr-type G domain; it reads ARAPVVTVMG…ALQAELLELS (170 aa). The interval 450 to 457 is G1; the sequence is GHVDHGKT. 450 to 457 provides a ligand contact to GTP; sequence GHVDHGKT. The interval 475–479 is G2; the sequence is GITQH. The segment at 496–499 is G3; sequence DTPG. Residues 496–500 and 550–553 contribute to the GTP site; these read DTPGH and NKID. The tract at residues 550–553 is G4; it reads NKID. The G5 stretch occupies residues 586-588; sequence SAQ.

The protein belongs to the TRAFAC class translation factor GTPase superfamily. Classic translation factor GTPase family. IF-2 subfamily.

It is found in the cytoplasm. Functionally, one of the essential components for the initiation of protein synthesis. Protects formylmethionyl-tRNA from spontaneous hydrolysis and promotes its binding to the 30S ribosomal subunits. Also involved in the hydrolysis of GTP during the formation of the 70S ribosomal complex. The sequence is that of Translation initiation factor IF-2 from Teredinibacter turnerae (strain ATCC 39867 / T7901).